The sequence spans 199 residues: Peptidyl-tRNA hydrolase (199 aa).

A tRNA-binding site is contributed by Y15. The active-site Proton acceptor is H20. Residues Y66, N68, and N114 each contribute to the tRNA site.

The protein belongs to the PTH family. Monomer.

It is found in the cytoplasm. The enzyme catalyses an N-acyl-L-alpha-aminoacyl-tRNA + H2O = an N-acyl-L-amino acid + a tRNA + H(+). In terms of biological role, hydrolyzes ribosome-free peptidyl-tRNAs (with 1 or more amino acids incorporated), which drop off the ribosome during protein synthesis, or as a result of ribosome stalling. Catalyzes the release of premature peptidyl moieties from peptidyl-tRNA molecules trapped in stalled 50S ribosomal subunits, and thus maintains levels of free tRNAs and 50S ribosomes. The protein is Peptidyl-tRNA hydrolase of Burkholderia multivorans (strain ATCC 17616 / 249).